Here is an 80-residue protein sequence, read N- to C-terminus: ATP synthase subunit c (80 aa).

A run of 2 helical transmembrane segments spans residues 8–28 (MIYF…AIGI) and 55–75 (IVMG…LYLI).

This sequence belongs to the ATPase C chain family. In terms of assembly, F-type ATPases have 2 components, F(1) - the catalytic core - and F(0) - the membrane proton channel. F(1) has five subunits: alpha(3), beta(3), gamma(1), delta(1), epsilon(1). F(0) has three main subunits: a(1), b(2) and c(10-14). The alpha and beta chains form an alternating ring which encloses part of the gamma chain. F(1) is attached to F(0) by a central stalk formed by the gamma and epsilon chains, while a peripheral stalk is formed by the delta and b chains.

It is found in the cell inner membrane. In terms of biological role, f(1)F(0) ATP synthase produces ATP from ADP in the presence of a proton or sodium gradient. F-type ATPases consist of two structural domains, F(1) containing the extramembraneous catalytic core and F(0) containing the membrane proton channel, linked together by a central stalk and a peripheral stalk. During catalysis, ATP synthesis in the catalytic domain of F(1) is coupled via a rotary mechanism of the central stalk subunits to proton translocation. Its function is as follows. Key component of the F(0) channel; it plays a direct role in translocation across the membrane. A homomeric c-ring of between 10-14 subunits forms the central stalk rotor element with the F(1) delta and epsilon subunits. The polypeptide is ATP synthase subunit c (Aeromonas salmonicida (strain A449)).